The chain runs to 711 residues: Ribosomal RNA large subunit methyltransferase K/L (711 aa).

The THUMP domain maps to Thr-43–Leu-154.

This sequence belongs to the methyltransferase superfamily. RlmKL family.

The protein localises to the cytoplasm. The enzyme catalyses guanosine(2445) in 23S rRNA + S-adenosyl-L-methionine = N(2)-methylguanosine(2445) in 23S rRNA + S-adenosyl-L-homocysteine + H(+). It catalyses the reaction guanosine(2069) in 23S rRNA + S-adenosyl-L-methionine = N(2)-methylguanosine(2069) in 23S rRNA + S-adenosyl-L-homocysteine + H(+). In terms of biological role, specifically methylates the guanine in position 2445 (m2G2445) and the guanine in position 2069 (m7G2069) of 23S rRNA. This is Ribosomal RNA large subunit methyltransferase K/L from Haemophilus influenzae (strain PittGG).